Reading from the N-terminus, the 504-residue chain is D-alanine--D-alanyl carrier protein ligase (504 aa).

Residue 152–153 (TS) coordinates ATP. Asp197 contacts D-alanine. 292–297 (NTYGPT) provides a ligand contact to ATP. Val301 contacts D-alanine. Residues Asp383, 394–397 (YNGR), and Lys492 each bind ATP. Lys492 contributes to the D-alanine binding site.

Belongs to the ATP-dependent AMP-binding enzyme family. DltA subfamily.

It localises to the cytoplasm. The catalysed reaction is holo-[D-alanyl-carrier protein] + D-alanine + ATP = D-alanyl-[D-alanyl-carrier protein] + AMP + diphosphate. The protein operates within cell wall biogenesis; lipoteichoic acid biosynthesis. Functionally, catalyzes the first step in the D-alanylation of lipoteichoic acid (LTA), the activation of D-alanine and its transfer onto the D-alanyl carrier protein (Dcp) DltC. In an ATP-dependent two-step reaction, forms a high energy D-alanyl-AMP intermediate, followed by transfer of the D-alanyl residue as a thiol ester to the phosphopantheinyl prosthetic group of the Dcp. D-alanylation of LTA plays an important role in modulating the properties of the cell wall in Gram-positive bacteria, influencing the net charge of the cell wall. The polypeptide is D-alanine--D-alanyl carrier protein ligase (Bacillus cereus (strain B4264)).